The following is a 177-amino-acid chain: NAD(P)H-quinone oxidoreductase subunit 6, chloroplastic (177 aa).

5 helical membrane-spanning segments follow: residues 10-30 (VLLVFLGSGLILGGLGVVLLT), 32-52 (PIYSAFSLGLVLVCISLFYIL), 61-81 (AQLLIYVGAVNVLIIFAVMFM), 90-112 (FYLWTVGDGVTSLVCTSILFSLI), and 152-172 (FYLPFELVSIILLVALIGAIT).

The protein belongs to the complex I subunit 6 family. NDH is composed of at least 16 different subunits, 5 of which are encoded in the nucleus.

The protein resides in the plastid. It localises to the chloroplast thylakoid membrane. It catalyses the reaction a plastoquinone + NADH + (n+1) H(+)(in) = a plastoquinol + NAD(+) + n H(+)(out). It carries out the reaction a plastoquinone + NADPH + (n+1) H(+)(in) = a plastoquinol + NADP(+) + n H(+)(out). In terms of biological role, NDH shuttles electrons from NAD(P)H:plastoquinone, via FMN and iron-sulfur (Fe-S) centers, to quinones in the photosynthetic chain and possibly in a chloroplast respiratory chain. The immediate electron acceptor for the enzyme in this species is believed to be plastoquinone. Couples the redox reaction to proton translocation, and thus conserves the redox energy in a proton gradient. This Acorus calamus var. americanus (American sweet flag) protein is NAD(P)H-quinone oxidoreductase subunit 6, chloroplastic (ndhG).